The sequence spans 79 residues: Small ribosomal subunit protein bS18 (79 aa).

The protein belongs to the bacterial ribosomal protein bS18 family. Part of the 30S ribosomal subunit. Forms a tight heterodimer with protein bS6.

Binds as a heterodimer with protein bS6 to the central domain of the 16S rRNA, where it helps stabilize the platform of the 30S subunit. The chain is Small ribosomal subunit protein bS18 from Streptococcus pneumoniae serotype 19F (strain G54).